Reading from the N-terminus, the 345-residue chain is Olfactory receptor 11G2 (345 aa).

At 1–62 (MHFLSQNDLN…LGFPCPREGQ (62 aa)) the chain is on the extracellular side. An N-linked (GlcNAc...) asparagine glycan is attached at Asn43. Residues 63 to 83 (ILLFVLFTVVYLLTLMGNGSI) form a helical membrane-spanning segment. The Cytoplasmic portion of the chain corresponds to 84-92 (ICAVHWDQR). The helical transmembrane segment at 93 to 113 (LHAPMYILLANFSFLEICYVT) threads the bilayer. Over 114–135 (STVPSMLANFLSDTKIISFSGC) the chain is Extracellular. A disulfide bond links Cys135 and Cys217. A helical transmembrane segment spans residues 136–156 (FLQFYFFFSLGSTECFFLAVM). Residues 157–181 (AFDRYLAICRPLRYPTIMTRRLCTN) are Cytoplasmic-facing. A helical transmembrane segment spans residues 182 to 202 (LVVNCWVLGFIWFLIPIVNIS). The Extracellular portion of the chain corresponds to 203-241 (QMSFCGSRIIDHFLCDPAPLLTLTCKKGPVIELVFSVLS). Residues 242-264 (PLPVFMLFLFIVGSYALVVRAVL) form a helical membrane-spanning segment. Residues 265-275 (RVPSAAGRRKA) are Cytoplasmic-facing. Residues 276–296 (FSTCGSHLAVVSLFYGSVLVM) form a helical membrane-spanning segment. Residues 297–309 (YGSPPSKNEAGKQ) are Extracellular-facing. A helical transmembrane segment spans residues 310–330 (KTVTLFYSVVTPLLNPVIYSL). The Cytoplasmic segment spans residues 331-345 (RNKDMRKALKKFWGT).

It belongs to the G-protein coupled receptor 1 family.

The protein localises to the cell membrane. Its function is as follows. Odorant receptor. The sequence is that of Olfactory receptor 11G2 (OR11G2) from Homo sapiens (Human).